The chain runs to 153 residues: uncharacterized protein (153 aa).

To M.jannaschii MJ1183.

This is an uncharacterized protein from Methanothermobacter thermautotrophicus (strain ATCC 29096 / DSM 1053 / JCM 10044 / NBRC 100330 / Delta H) (Methanobacterium thermoautotrophicum).